The following is a 760-amino-acid chain: Xaa-Pro dipeptidyl-peptidase (760 aa).

Active-site charge relay system residues include Ser-349, Asp-469, and His-499.

Belongs to the peptidase S15 family. In terms of assembly, homodimer.

It is found in the cytoplasm. The enzyme catalyses Hydrolyzes Xaa-Pro-|- bonds to release unblocked, N-terminal dipeptides from substrates including Ala-Pro-|-p-nitroanilide and (sequentially) Tyr-Pro-|-Phe-Pro-|-Gly-Pro-|-Ile.. Removes N-terminal dipeptides sequentially from polypeptides having unsubstituted N-termini provided that the penultimate residue is proline. In Streptococcus pyogenes serotype M12 (strain MGAS9429), this protein is Xaa-Pro dipeptidyl-peptidase.